The sequence spans 717 residues: DNA-binding protein RFX2 (717 aa).

The disordered stretch occupies residues 1 to 28; the sequence is MQNSEGGADSPASVALRPAAQPMPASPQ. Ser26 is modified (phosphoserine). A DNA-binding region (RFX-type winged-helix) is located at residues 194–269; it reads HLQWLLDNYE…YHYYGIRLKP (76 aa). Residues 286–318 form a disordered region; the sequence is RQQPTHQKPRYRPAQKSDSLGDGSAHSNMHGMP. Ser411 carries the post-translational modification Phosphoserine. The span at 685-710 shows a compositional bias: basic and acidic residues; it reads DGHSSEADVDGRSLGEPLVKRERSDP. The segment at 685–717 is disordered; the sequence is DGHSSEADVDGRSLGEPLVKRERSDPSHPLQGI.

It belongs to the RFX family. As to quaternary structure, homodimer; probably only forms homodimers in testis. Heterodimer; heterodimerizes with RFX1 and RFX3.

It is found in the nucleus. It localises to the cytoplasm. Transcription factor that acts as a key regulator of spermatogenesis. Acts by regulating expression of genes required for the haploid phase during spermiogenesis, such as genes required for cilium assembly and function. Recognizes and binds the X-box, a regulatory motif with DNA sequence 5'-GTNRCC(0-3N)RGYAAC-3' present on promoters. Probably activates transcription of the testis-specific histone gene H1-6. This chain is DNA-binding protein RFX2 (Rfx2), found in Mus musculus (Mouse).